An 89-amino-acid chain; its full sequence is Small ribosomal subunit protein uS15 (89 aa).

Belongs to the universal ribosomal protein uS15 family. In terms of assembly, part of the 30S ribosomal subunit. Forms a bridge to the 50S subunit in the 70S ribosome, contacting the 23S rRNA.

Its function is as follows. One of the primary rRNA binding proteins, it binds directly to 16S rRNA where it helps nucleate assembly of the platform of the 30S subunit by binding and bridging several RNA helices of the 16S rRNA. In terms of biological role, forms an intersubunit bridge (bridge B4) with the 23S rRNA of the 50S subunit in the ribosome. This is Small ribosomal subunit protein uS15 from Chloroherpeton thalassium (strain ATCC 35110 / GB-78).